The sequence spans 233 residues: N-(5'-phosphoribosyl)anthranilate isomerase (233 aa).

It belongs to the TrpF family.

It catalyses the reaction N-(5-phospho-beta-D-ribosyl)anthranilate = 1-(2-carboxyphenylamino)-1-deoxy-D-ribulose 5-phosphate. The protein operates within amino-acid biosynthesis; L-tryptophan biosynthesis; L-tryptophan from chorismate: step 3/5. This chain is N-(5'-phosphoribosyl)anthranilate isomerase, found in Ralstonia pickettii (strain 12J).